We begin with the raw amino-acid sequence, 374 residues long: Methionine import ATP-binding protein MetN 2 (374 aa).

The disordered stretch occupies residues 1–22; that stretch reads MSVATLQRKLPEAAPRRAGQTE. The 240-residue stretch at 32–271 folds into the ABC transporter domain; it reads VRFIGLGKTY…PQHEVSKTLL (240 aa). Residue 68 to 75 participates in ATP binding; that stretch reads GRSGAGKS.

It belongs to the ABC transporter superfamily. Methionine importer (TC 3.A.1.24) family. As to quaternary structure, the complex is composed of two ATP-binding proteins (MetN), two transmembrane proteins (MetI) and a solute-binding protein (MetQ).

Its subcellular location is the cell inner membrane. It carries out the reaction L-methionine(out) + ATP + H2O = L-methionine(in) + ADP + phosphate + H(+). The catalysed reaction is D-methionine(out) + ATP + H2O = D-methionine(in) + ADP + phosphate + H(+). Functionally, part of the ABC transporter complex MetNIQ involved in methionine import. Responsible for energy coupling to the transport system. The protein is Methionine import ATP-binding protein MetN 2 of Pseudomonas fluorescens (strain ATCC BAA-477 / NRRL B-23932 / Pf-5).